Consider the following 874-residue polypeptide: Alanine--tRNA ligase (874 aa).

Residues His562, His566, Cys663, and His667 each contribute to the Zn(2+) site.

Belongs to the class-II aminoacyl-tRNA synthetase family. The cofactor is Zn(2+).

Its subcellular location is the cytoplasm. The catalysed reaction is tRNA(Ala) + L-alanine + ATP = L-alanyl-tRNA(Ala) + AMP + diphosphate. Catalyzes the attachment of alanine to tRNA(Ala) in a two-step reaction: alanine is first activated by ATP to form Ala-AMP and then transferred to the acceptor end of tRNA(Ala). Also edits incorrectly charged Ser-tRNA(Ala) and Gly-tRNA(Ala) via its editing domain. The protein is Alanine--tRNA ligase of Bordetella bronchiseptica (strain ATCC BAA-588 / NCTC 13252 / RB50) (Alcaligenes bronchisepticus).